A 69-amino-acid chain; its full sequence is uncharacterized protein (69 aa).

Over 1–15 (MLLYIVIIVACIISK) the chain is Cytoplasmic. The helical transmembrane segment at 16–36 (LVPNEYWAIHLFFIIMIFMVY) threads the bilayer. The Extracellular segment spans residues 37-69 (MYKKLDIHQKYQFWNYTMSGLSGHNVQVTCKCY). N-linked (GlcNAc...) asparagine; by host glycosylation is present at Asn-51.

This sequence belongs to the asfivirus X69R family.

Its subcellular location is the host membrane. This is an uncharacterized protein from African swine fever virus (isolate Tick/Malawi/Lil 20-1/1983) (ASFV).